A 450-amino-acid chain; its full sequence is MAKDLLPKQAANEPSLKDCTCKRCLKLGASKEKKIRRKKKGEEKRERHYGNRRKLTFNFLKHTNMENTNYDVITSVGYLNEKYGLKKSHYIEKFIKCIHRKINIDVSKITDAYVNSLNPWVKVKLFLLLVTLSEKGGPEYWLDKTDGEKNSEASSTDNSLENSTKGADSAGSTALRDEMVKSHKNLFPTLTEQIIQHNINQDFTESTYDEDYVFSSIWANFMEGLINHYLEKVIVPYSEMKVCQQLYKPMMKIISLYNEYNELMVKSEKNGFLPSLQDSENVQGDKGEKESKDDAVSQERLERAQKLLWQAREDIPKTISKELTLLSEMYSTLSADEQDYELDEFVCCAEEYIELEYLPALVDVLFANCGTNNFWKIMLVLEPFFYYIEDVGGDDDEDEDNVDNSEGDEESLLSRNVEGDDNVVERHFKPDPRVITLEKICEVAARQKWI.

Over residues 141–151 the composition is skewed to basic and acidic residues; the sequence is WLDKTDGEKNS. 3 disordered regions span residues 141 to 171, 276 to 298, and 395 to 416; these read WLDKTDGEKNSEASSTDNSLENSTKGADSAG, LQDSENVQGDKGEKESKDDAVSQ, and DDEDEDNVDNSEGDEESLLSRN. Positions 152–171 are enriched in polar residues; that stretch reads EASSTDNSLENSTKGADSAG. Basic and acidic residues predominate over residues 283 to 298; sequence QGDKGEKESKDDAVSQ. Acidic residues predominate over residues 395–411; that stretch reads DDEDEDNVDNSEGDEES.

This is an uncharacterized protein from Saccharomyces cerevisiae (strain ATCC 204508 / S288c) (Baker's yeast).